The chain runs to 153 residues: Lipoprotein signal peptidase (153 aa).

2 helical membrane passes run 52 to 72 (ILAG…IGIV) and 81 to 101 (GQML…GNFI). Residues Asp-111 and Asp-129 contribute to the active site. A helical membrane pass occupies residues 124–144 (IFNIADSSLCVGVILLFIHML).

The protein belongs to the peptidase A8 family.

The protein localises to the cell membrane. It carries out the reaction Release of signal peptides from bacterial membrane prolipoproteins. Hydrolyzes -Xaa-Yaa-Zaa-|-(S,diacylglyceryl)Cys-, in which Xaa is hydrophobic (preferably Leu), and Yaa (Ala or Ser) and Zaa (Gly or Ala) have small, neutral side chains.. Its pathway is protein modification; lipoprotein biosynthesis (signal peptide cleavage). In terms of biological role, this protein specifically catalyzes the removal of signal peptides from prolipoproteins. The sequence is that of Lipoprotein signal peptidase from Bacillus velezensis (strain DSM 23117 / BGSC 10A6 / LMG 26770 / FZB42) (Bacillus amyloliquefaciens subsp. plantarum).